A 574-amino-acid polypeptide reads, in one-letter code: Septation ring formation regulator EzrA (574 aa).

Residues 1–7 lie on the Extracellular side of the membrane; the sequence is MSSGIIL. The helical transmembrane segment at 8 to 26 threads the bilayer; it reads LIVAIVLLVIIAYLIGVII. The Cytoplasmic portion of the chain corresponds to 27 to 574; the sequence is RKRNDSMIGT…YERTREHIRF (548 aa). Coiled coils occupy residues 102–140, 243–379, and 459–520; these read NFIR…QEEK, RRLL…GQEI, and QLEA…SFEA.

It belongs to the EzrA family.

Its subcellular location is the cell membrane. Its function is as follows. Negative regulator of FtsZ ring formation; modulates the frequency and position of FtsZ ring formation. Inhibits FtsZ ring formation at polar sites. Interacts either with FtsZ or with one of its binding partners to promote depolymerization. The sequence is that of Septation ring formation regulator EzrA from Streptococcus uberis (strain ATCC BAA-854 / 0140J).